We begin with the raw amino-acid sequence, 208 residues long: Proteasome subunit beta 2 (208 aa).

The propeptide at Met1 to Lys9 is removed in mature form; by autocatalysis. Thr10 acts as the Nucleophile in catalysis.

This sequence belongs to the peptidase T1B family. As to quaternary structure, the 20S proteasome core is composed of 14 alpha and 14 beta subunits that assemble into four stacked heptameric rings, resulting in a barrel-shaped structure. The two inner rings, each composed of seven catalytic beta subunits, are sandwiched by two outer rings, each composed of seven alpha subunits. The catalytic chamber with the active sites is on the inside of the barrel. Has a gated structure, the ends of the cylinder being occluded by the N-termini of the alpha-subunits. Is capped at one or both ends by the proteasome regulatory ATPase, PAN.

Its subcellular location is the cytoplasm. The catalysed reaction is Cleavage of peptide bonds with very broad specificity.. The formation of the proteasomal ATPase PAN-20S proteasome complex, via the docking of the C-termini of PAN into the intersubunit pockets in the alpha-rings, triggers opening of the gate for substrate entry. Interconversion between the open-gate and close-gate conformations leads to a dynamic regulation of the 20S proteasome proteolysis activity. Functionally, component of the proteasome core, a large protease complex with broad specificity involved in protein degradation. The polypeptide is Proteasome subunit beta 2 (Staphylothermus marinus (strain ATCC 43588 / DSM 3639 / JCM 9404 / F1)).